We begin with the raw amino-acid sequence, 603 residues long: Geraniol synthase Tps-5073G30, chloroplastic (603 aa).

The N-terminal 35 residues, 1–35 (MCSISQKVVIGLNKAAANNNLQNLDRRGFKTRCVS), are a transit peptide targeting the chloroplast. Residues arginine 319, aspartate 356, aspartate 360, arginine 497, and aspartate 500 each coordinate (2E)-geranyl diphosphate. The Mg(2+) site is built by aspartate 356 and aspartate 360. The DDXXD motif signature appears at 356–360 (DDVYD). Residues aspartate 500, threonine 504, and glutamate 508 each contribute to the Mg(2+) site.

Belongs to the terpene synthase family. Tpsb subfamily. Monomer. It depends on Mg(2+) as a cofactor. Mn(2+) is required as a cofactor.

The protein resides in the plastid. Its subcellular location is the chloroplast. The catalysed reaction is (2E)-geranyl diphosphate + H2O = (2E)-geraniol + diphosphate. It participates in secondary metabolite biosynthesis; terpenoid biosynthesis. Its function is as follows. Monoterpene synthase (mono-TPS) involved in the biosynthesis of monoterpenes natural products. Catalyzes the conversion of (2E)-geranyl diphosphate (GPP) into geraniol. This chain is Geraniol synthase Tps-5073G30, chloroplastic, found in Perilla frutescens (Beefsteak mint).